Reading from the N-terminus, the 1489-residue chain is ABC transporter FUM19 (1489 aa).

The next 10 helical transmembrane spans lie at 33–53, 84–104, 116–136, 143–163, 264–284, 302–322, 373–393, 397–417, 482–502, and 511–531; these read IIFFIAPSCVFTALTFVRIFV, CFSSSQVLGLVAGMTTAALSY, LLSIYLFLSLLLDIAHDRTLW, LEYGFSSVFSAAVAIKAFAVW, LLLPVLPRIALIGLSLAQAFL, WGLIGATVLIYGGISICTSLY, FLNLHELWANIVEAGLAAWFL, VGIAFIAPIGLVLLSFLGVSI, IASLIIAFAPDLTAPGIMLAA, and HKVYTAIALLTLLTVPLGSIF. Residues 272 to 539 enclose the ABC transmembrane type-1 1 domain; it reads IALIGLSLAQ…IFRSVSPLMS (268 aa). An ABC transporter 1 domain is found at 591–823; it reads VKVIQASFGW…YQSHLQSLCI (233 aa). N-linked (GlcNAc...) asparagine glycosylation is found at asparagine 612 and asparagine 616. 625–632 lines the ATP pocket; sequence GPVGSGKS. N-linked (GlcNAc...) asparagine glycosylation is present at asparagine 670. Residues 852–862 are compositionally biased toward basic and acidic residues; that stretch reads EQTRSSRRGAD. The tract at residues 852–874 is disordered; sequence EQTRSSRRGADNQETIASGADSS. A compositionally biased stretch (polar residues) spans 863 to 874; sequence NQETIASGADSS. 6 helical membrane passes run 890–910, 945–965, 977–999, 1031–1051, 1120–1140, and 1149–1169; these read AVPPVAIISFVTSSLSYGFLY, ILALLSELLTMYLALTYFALI, AITRAPLYFFASVDLGTITNYFS, AASSPYLAASYPLCFFLLYFV, WLLFILNTFVSLLALFTVALV, and GFAGAGLISLMQIGQFLTNVV. In terms of domain architecture, ABC transmembrane type-1 2 spans 902 to 1187; it reads SSLSYGFLYS…SMGAVSRLKA (286 aa). Positions 1214-1485 constitute an ABC transporter 2 domain; that stretch reads IKIDGVSASY…KEGKFRALWE (272 aa). 1254–1261 lines the ATP pocket; it reads GRTGSGKS.

Belongs to the ABC transporter superfamily. ABCC family. Conjugate transporter (TC 3.A.1.208) subfamily.

The protein localises to the cell membrane. ABC transporter that may provide the dual role of fumonisin export and self-protection by allowing the fungus to evade the harmful effect of its own fumonisin production. Plays a role in the repression of the gene cluster that mediates fumonisin biosynthesis. The protein is ABC transporter FUM19 of Gibberella moniliformis (strain M3125 / FGSC 7600) (Maize ear and stalk rot fungus).